A 423-amino-acid polypeptide reads, in one-letter code: Gamma-glutamyl phosphate reductase (423 aa).

It belongs to the gamma-glutamyl phosphate reductase family.

The protein resides in the cytoplasm. The catalysed reaction is L-glutamate 5-semialdehyde + phosphate + NADP(+) = L-glutamyl 5-phosphate + NADPH + H(+). The protein operates within amino-acid biosynthesis; L-proline biosynthesis; L-glutamate 5-semialdehyde from L-glutamate: step 2/2. Its function is as follows. Catalyzes the NADPH-dependent reduction of L-glutamate 5-phosphate into L-glutamate 5-semialdehyde and phosphate. The product spontaneously undergoes cyclization to form 1-pyrroline-5-carboxylate. This chain is Gamma-glutamyl phosphate reductase, found in Paraburkholderia xenovorans (strain LB400).